A 514-amino-acid chain; its full sequence is Cytochrome P450 monooxygenase FUS8 (514 aa).

The helical transmembrane segment at 28-48 threads the bilayer; the sequence is LTVTKAVGAFIVLFIIIPKVF. Residues Asn-225 and Asn-443 are each glycosylated (N-linked (GlcNAc...) asparagine). Heme is bound at residue Cys-460.

The protein belongs to the cytochrome P450 family. Requires heme as cofactor.

The protein resides in the membrane. Its pathway is mycotoxin biosynthesis. Functionally, cytochrome P450 monooxygenase; part of the gene cluster that mediates the biosynthesis of the mycotoxin fusarin C. Within the cluster, FUS1, FUS2, FUS8 and FUS9 are sufficient for fusarin production. The roles of the other FUS members are yet undetermined. The fusarin C synthetase FUS1 is responsible for the condensation of one acetyl-coenzyme A (CoA) unit with six malonyl-CoA units and the amide linkage of the arising heptaketide and homoserine, subsequently releasing the first intermediate, prefusarin, as an alcohol with an open ring structure. The cytochrome P450 monooxygenase FUS8 participates in multiple oxidation processes at carbon C-20 and is able to use the FUS1 product as substrate, resulting in formation of 20-hydroxy-prefusarin. This reaction seems to be essential before the 2-pyrrolidone ring closure can be catalyzed by FUS2, generating 20-hydroxy-fusarin. FUS8 is able to further oxidizes carbon C-20 after ring closure, resulting in the formation of carboxy-fusarin C. As the last step, FUS9 methylates the hydroxyl group at C-21 to generate fusarin C. Fusarin C can then rearrange to epi-fusarin C, the (z)-isomers, and fusarin A and fusarin D. The polypeptide is Cytochrome P450 monooxygenase FUS8 (Gibberella moniliformis (strain M3125 / FGSC 7600) (Maize ear and stalk rot fungus)).